The following is a 158-amino-acid chain: Snaclec coagulation factor X-activating enzyme light chain 2 (158 aa).

Residues Met-1 to Gly-24 form the signal peptide. Intrachain disulfides connect Cys-27/Cys-38, Cys-55/Cys-152, and Cys-127/Cys-144. In terms of domain architecture, C-type lectin spans Tyr-34–Lys-153. Asn-82 is a glycosylation site (N-linked (GlcNAc...) (complex) asparagine).

It belongs to the snaclec family. Heterotrimer; disulfide-linked. The heterotrimer consists of 1 heavy chain (a metalloproteinase) and 2 light chains: LC1 and LC2. Post-translationally, N-glycosylated; probably required for conformation. Removal of easily accessible sugars does not change its functional capacity, but removal of the core sugars with N-glycanase causes a virtually complete loss of enzyme activity, apparently as a result of major conformational changes in the molecule. Not O-glycosylated. Expressed by the venom gland.

The protein resides in the secreted. Its function is as follows. Regulatory subunit of the blood coagulation factor X- and IX-activating enzyme. The enzyme activates coagulation factor X (F10) by cleaving the Arg-Ile bond and is also able to activate coagulation factor IX (F9) and protein S (PROS1) by specific cleavage of Arg-Ile and Arg-Val bonds. May serve as an exosite by which the enzyme recognizes and binds to the Gla domain of factor X (F10) and factor IX (F9) in a calcium-dependent manner. This chain is Snaclec coagulation factor X-activating enzyme light chain 2 (LC2), found in Daboia siamensis (Eastern Russel's viper).